A 94-amino-acid polypeptide reads, in one-letter code: ESAT-6-like protein EsxL (94 aa).

Belongs to the WXG100 family. ESAT-6 subfamily. Strongly interacts with EsxK to form a heterodimeric complex under reducing conditions.

The protein localises to the secreted. This Mycobacterium tuberculosis (strain CDC 1551 / Oshkosh) protein is ESAT-6-like protein EsxL.